The chain runs to 333 residues: Foldase protein PrsA (333 aa).

A signal peptide spans 1 to 22 (MKSAKQIATALLVGMFTFSAVG). Residue C23 is the site of N-palmitoyl cysteine attachment. A lipid anchor (S-diacylglycerol cysteine) is attached at C23. The PpiC domain occupies 192 to 283 (PNTVHLAHIL…FGWHVIKCIK (92 aa)).

The protein belongs to the PrsA family.

Its subcellular location is the cell membrane. It catalyses the reaction [protein]-peptidylproline (omega=180) = [protein]-peptidylproline (omega=0). In terms of biological role, plays a major role in protein secretion by helping the post-translocational extracellular folding of several secreted proteins. The sequence is that of Foldase protein PrsA from Clostridium acetobutylicum (strain ATCC 824 / DSM 792 / JCM 1419 / IAM 19013 / LMG 5710 / NBRC 13948 / NRRL B-527 / VKM B-1787 / 2291 / W).